The chain runs to 380 residues: Asporin (380 aa).

The signal sequence occupies residues 1–14; sequence MKEYVLLLFLALCS. A propeptide spanning residues 15-32 is cleaved from the precursor; the sequence is AKPFFSPSHIALKNMMLK. The segment covering 35 to 54 has biased composition (acidic residues); the sequence is EDTDDDDDDDDDDDDDDEDN. The tract at residues 35-59 is disordered; it reads EDTDDDDDDDDDDDDDDEDNSLFPT. A glycan (O-linked (GalNAc...) serine) is linked at Ser55. Positions 66-102 constitute an LRRNT domain; that stretch reads FFPFDLFPMCPFGCQCYSRVVHCSDLGLTSVPTNIPF. Disulfide bonds link Cys75–Cys81 and Cys79–Cys88. 11 LRR repeats span residues 103–124, 127–148, 151–173, 174–193, 196–219, 242–263, 266–287, 290–312, 313–334, 335–357, and 358–380; these read DTRMLDLQNNKIKEIKENDFKG, SLYGLILNNNKLTKIHPKAFLT, KLRRLYLSHNQLSEIPLNLPKSL, AELRIHENKVKKIQKDTFKG, ALHVLEMSANPLDNNGIEPGAFEG, TLLELHLDYNKISTVELEDFKR, ELQRLGLGNNKITDIENGSLAN, RVREIHLENNKLKKIPSGLPELK, YLQIIFLHSNSIARVGVNDFCP, TVPKMKKSLYSAISLFNNPVKYW, and EMQPATFRCVLSRMSVQLGNFGM. The interaction with TGFB1 stretch occupies residues 166–212; it reads PLNLPKSLAELRIHENKVKKIQKDTFKGMNALHVLEMSANPLDNNGI. Asn282 is a glycosylation site (N-linked (GlcNAc...) asparagine). A disulfide bridge connects residues Cys333 and Cys366.

It belongs to the small leucine-rich proteoglycan (SLRP) family. SLRP class I subfamily. Interacts with TGFB1, TGFB2 and TGFB3. DCN, BGN, and FMOD inhibit binding to TGFB1. Interacts with BMP2. Interacts in vitro with type II collagen. Interacts with type I collagen. DCN can inhibit collagen binding. Post-translationally, there is no serine/glycine dipeptide sequence expected for the attachment of O-linked glycosaminoglycans and this is probably not a proteoglycan. The O-linked polysaccharide on 54-Ser is probably the mucin type linked to GalNAc. In terms of processing, the N-linked glycan at Asn-282 is composed of variable structures of GlcNAc, mannose, fucose, HexNAc and hexose. In terms of tissue distribution, higher levels in osteoarthritic articular cartilage, aorta, uterus. Moderate expression in small intestine, heart, liver, bladder, ovary, stomach, and in the adrenal, thyroid, and mammary glands. Low expression in trachea, bone marrow, and lung. Colocalizes with TGFB1 in chondrocytes within osteoarthritic (OA) lesions of articular cartilage.

The protein resides in the secreted. It localises to the extracellular space. Its subcellular location is the extracellular matrix. Negatively regulates periodontal ligament (PDL) differentiation and mineralization to ensure that the PDL is not ossified and to maintain homeostasis of the tooth-supporting system. Inhibits BMP2-induced cytodifferentiation of PDL cells by preventing its binding to BMPR1B/BMP type-1B receptor, resulting in inhibition of BMP-dependent activation of SMAD proteins. Critical regulator of TGF-beta in articular cartilage and plays an essential role in cartilage homeostasis and osteoarthritis (OA) pathogenesis. Negatively regulates chondrogenesis in the articular cartilage by blocking the TGF-beta/receptor interaction on the cell surface and inhibiting the canonical TGF-beta/Smad signal. Binds calcium and plays a role in osteoblast-driven collagen biomineralization activity. The polypeptide is Asporin (ASPN) (Homo sapiens (Human)).